Reading from the N-terminus, the 473-residue chain is ATP synthase subunit beta (473 aa).

153–160 is an ATP binding site; sequence GGAGVGKT.

It belongs to the ATPase alpha/beta chains family. F-type ATPases have 2 components, CF(1) - the catalytic core - and CF(0) - the membrane proton channel. CF(1) has five subunits: alpha(3), beta(3), gamma(1), delta(1), epsilon(1). CF(0) has three main subunits: a(1), b(2) and c(9-12). The alpha and beta chains form an alternating ring which encloses part of the gamma chain. CF(1) is attached to CF(0) by a central stalk formed by the gamma and epsilon chains, while a peripheral stalk is formed by the delta and b chains.

It localises to the cell inner membrane. The enzyme catalyses ATP + H2O + 4 H(+)(in) = ADP + phosphate + 5 H(+)(out). In terms of biological role, produces ATP from ADP in the presence of a proton gradient across the membrane. The catalytic sites are hosted primarily by the beta subunits. The polypeptide is ATP synthase subunit beta (Rickettsia canadensis (strain McKiel)).